The primary structure comprises 175 residues: MASLNDSHFALFNLPEQFGLDVSALDRAYRTVQAQVHPDRFAAAGDAQKRIAMQWATRTNEAYQTLHDPLKRARYLLSLRGIDVGAENNTAMEPAFLMQQMEWRESIEDASAAKNVDALDALLTDLRDEEKVRFTKLAALLDSGSNQAASEAVRQLMFIERVAAEIGTQIERLDN.

The 73-residue stretch at 7-79 (SHFALFNLPE…LKRARYLLSL (73 aa)) folds into the J domain.

Belongs to the HscB family. Interacts with HscA and stimulates its ATPase activity.

In terms of biological role, co-chaperone involved in the maturation of iron-sulfur cluster-containing proteins. Seems to help targeting proteins to be folded toward HscA. In Paraburkholderia phymatum (strain DSM 17167 / CIP 108236 / LMG 21445 / STM815) (Burkholderia phymatum), this protein is Co-chaperone protein HscB homolog.